The following is a 317-amino-acid chain: Prenyl transferase paxC (317 aa).

Positions 53 and 86 each coordinate substrate. Positions 93 and 97 each coordinate Mg(2+). Substrate-binding residues include R102, K186, T187, Q216, N223, and K233.

It belongs to the FPP/GGPP synthase family.

It participates in secondary metabolite biosynthesis. Functionally, prenyl transferase; part of the gene cluster that mediates the biosynthesis of paxalline, a mycotoxin that acts as an inhibitor of mammalian maxi-K channels. PaxG, the geranylgeranyl diphosphate (GGPP) synthase is proposed to catalyze the first step in paxilline biosynthesis. Condensation of indole-3-glycerol phosphate with GGPP by paxC then forms 3-geranylgeranylindole (3-GGI), followed by epoxidation and cyclization of this intermediate (by paxM and paxB) to form paspaline. Paspaline is subsequently converted to 13-desoxypaxilline by paxP, the latter being then converted to paxilline by paxQ. Finally paxilline can be mono- and di-prenylated by paxD. This is Prenyl transferase paxC from Penicillium paxilli.